The following is a 638-amino-acid chain: Replication protein E1 (638 aa).

A Nuclear localization signal motif is present at residues 84-86 (KRK). Residue S90 is modified to Phosphoserine; by host. Positions 90 to 119 (SQNSPLQDITNQHRQQSDSQQNTHQVNNSQ) are enriched in polar residues. Positions 90–133 (SQNSPLQDITNQHRQQSDSQQNTHQVNNSQAKRRAVDSVPDSGY) are disordered. Residues 176–342 (THVNSVTQIC…QTQLEHSFDD (167 aa)) form a DNA-binding region region. One can recognise an SF3 helicase domain in the interval 441–591 (VNFIYFLQVL…FPFDSNGNPV (151 aa)). Residue 467–474 (GPPNTGKS) coordinates ATP.

The protein belongs to the papillomaviridae E1 protein family. As to quaternary structure, can form hexamers. Interacts with E2 protein; this interaction increases E1 DNA binding specificity. Interacts with host DNA polymerase subunit POLA2. Interacts with host single stranded DNA-binding protein RPA1. Interacts with host TOP1; this interaction stimulates the enzymatic activity of TOP1. Post-translationally, phosphorylated.

The protein resides in the host nucleus. It carries out the reaction Couples ATP hydrolysis with the unwinding of duplex DNA by translocating in the 3'-5' direction.. It catalyses the reaction ATP + H2O = ADP + phosphate + H(+). ATP-dependent DNA 3'-5' helicase required for initiation of viral DNA replication. It forms a complex with the viral E2 protein. The E1-E2 complex binds to the replication origin which contains binding sites for both proteins. During the initial step, a dimer of E1 interacts with a dimer of protein E2 leading to a complex that binds the viral origin of replication with high specificity. Then, a second dimer of E1 displaces the E2 dimer in an ATP-dependent manner to form the E1 tetramer. Following this, two E1 monomers are added to each half of the site, which results in the formation of two E1 trimers on the viral ori. Subsequently, two hexamers will be created. The double hexamer acts as a bi-directional helicase machinery and unwinds the viral DNA and then recruits the host DNA polymerase to start replication. This Homo sapiens (Human) protein is Replication protein E1.